Consider the following 2410-residue polypeptide: Genome polyprotein 1 (2410 aa).

A disordered region spans residues 1-22; that stretch reads MEQTLAQAVSRKSKTDTPMAEE. Residues 474 to 632 enclose the Helicase ATP-binding domain; sequence KMADANNCWS…AARKYPLHVE (159 aa). 487–494 contributes to the ATP binding site; sequence GHTGSGKS. One can recognise a Helicase C-terminal domain in the interval 647-813; that stretch reads GGGDLLDISK…NVPFYMNETF (167 aa). Tyrosine 1234 bears the O-(5'-phospho-RNA)-tyrosine mark. One can recognise a Peptidase C4 domain in the interval 1359-1573; it reads ITLEASTGIL…CGYASHTALF (215 aa). Catalysis depends on for nuclear inclusion protein A activity residues histidine 1404, aspartate 1440, and cysteine 1507. In terms of domain architecture, RdRp catalytic spans 1857–1980; sequence WLHGSGDGSR…AISPQFDEEF (124 aa). Positions 2173 to 2200 are disordered; sequence TRTPTEDDGKLKTPSGARIPSSAADGNW.

It belongs to the bymoviruses polyprotein 1 family. VPg is uridylylated by the polymerase and is covalently attached to the 5'-end of the genomic RNA. This uridylylated form acts as a nucleotide-peptide primer for the polymerase. Post-translationally, the viral RNA1 of bymoviruses is expressed as a single polyprotein which undergoes post-translational proteolytic processing by the main proteinase NIa-pro resulting in the production of at least eight individual proteins.

It is found in the host cytoplasmic vesicle. The protein localises to the virion. The catalysed reaction is RNA(n) + a ribonucleoside 5'-triphosphate = RNA(n+1) + diphosphate. It catalyses the reaction Hydrolyzes glutaminyl bonds, and activity is further restricted by preferences for the amino acids in P6 - P1' that vary with the species of potyvirus, e.g. Glu-Xaa-Xaa-Tyr-Xaa-Gln-|-(Ser or Gly) for the enzyme from tobacco etch virus. The natural substrate is the viral polyprotein, but other proteins and oligopeptides containing the appropriate consensus sequence are also cleaved.. In terms of biological role, indispensable for virus replication. Mediates the cap-independent, EIF4E-dependent translation of viral genomic RNAs. Binds to the cap-binding site of host EIF4E and thus interferes with the host EIF4E-dependent mRNA export and translation. VPg-RNA directly binds EIF4E and is a template for transcription. Also forms trimeric complexes with EIF4E-EIF4G, which are templates for translation. Its function is as follows. Has RNA-binding and proteolytic activities. Functionally, an RNA-dependent RNA polymerase that plays an essential role in the virus replication. The protein is Genome polyprotein 1 of Hordeum vulgare (Barley).